A 429-amino-acid polypeptide reads, in one-letter code: O-methyltransferase phnC (429 aa).

Asp285 provides a ligand contact to S-adenosyl-L-methionine.

This sequence belongs to the class I-like SAM-binding methyltransferase superfamily. Cation-independent O-methyltransferase family. COMT subfamily.

The enzyme catalyses (2'R)-atrovenetin + S-adenosyl-L-methionine = deoxyherqueinone + S-adenosyl-L-homocysteine + H(+). Its pathway is secondary metabolite biosynthesis. O-methyltransferase; part of the gene cluster that mediates the biosynthesis of phenalenones such as herqueinone, compounds that have been reported to treat tumors, bacterial infections and/or mycoses, and rheumatic diseases. The non-reducing polyketide synthase phnA synthesizes the heptaketide backbone and cyclizes it into the angular, hemiketal-containing naphtho-gamma-pyrone prephenalenone. The product template (PT) domain of phnA catalyzes only the C4-C9 aldol condensation, which is unprecedented among known PT domains. The transformation of prephenalenone to phenalenones requires an FAD-dependent monooxygenase phnB, which catalyzes the C2 aromatic hydroxylation of prephenalenone and ring opening of the gamma-pyrone ring simultaneously. Subsequent intramolecular deprotonation of C3 phenolic oxygen accelerates phenalenone ring closure to yield the tricyclic phenalenone core with a C2 hydroxylation. The prenyltransferase phnF further catalyzes reverse C-prenylation of phenalenone by direct electrophilic substitution at C6, or possibly via first a forward O-prenylation of a neighboring phenol in phenalenone, followed by a Claisen rearrangement. The hydroalkoxylation enzyme phnH catalyzes the 5-exo-trig cyclization via acid catalysis after the spontaneous deprotonation of 7-OH, which leads to the formation of the dihydrobenzofuran atrovenetin. Atrovenetin is further converted to deoxyherqueinone by the O-methyltransferase phnC which can methylate C2-OH to stabilize the northern portion of the phenalenone core. Finally, the oxidoreductase phnG converts deoxyherqueinone to herqueinone via C6 hydroxylation. This Penicillium herquei protein is O-methyltransferase phnC.